Reading from the N-terminus, the 252-residue chain is NAD-dependent protein deacetylase (252 aa).

Residues 1–248 enclose the Deacetylase sirtuin-type domain; that stretch reads MYLVEEAKKV…PEVISHIQSL (248 aa). The NAD(+) site is built by Ala-26, Thr-30, Phe-37, Arg-38, Gln-102, Val-104, Asp-105, and His-120. Phe-37 serves as a coordination point for nicotinamide. The nicotinamide site is built by Val-104 and Asp-105. His-120 acts as the Proton acceptor in catalysis. Zn(2+) is bound by residues Cys-128, Cys-131, Cys-153, and Cys-155. Residues Ser-191, Ser-192, Asn-216, and Ile-234 each coordinate NAD(+).

Belongs to the sirtuin family. Class U subfamily. Zn(2+) serves as cofactor.

The protein resides in the cytoplasm. The catalysed reaction is N(6)-acetyl-L-lysyl-[protein] + NAD(+) + H2O = 2''-O-acetyl-ADP-D-ribose + nicotinamide + L-lysyl-[protein]. Functionally, NAD-dependent protein deacetylase which modulates the activities of several enzymes which are inactive in their acetylated form. Deacetylates the N-terminal lysine residue of Alba, the major archaeal chromatin protein and that, in turn, increases Alba's DNA binding affinity, thereby repressing transcription. The polypeptide is NAD-dependent protein deacetylase (Sulfolobus acidocaldarius (strain ATCC 33909 / DSM 639 / JCM 8929 / NBRC 15157 / NCIMB 11770)).